Here is a 554-residue protein sequence, read N- to C-terminus: Hydroxylamine reductase (554 aa).

[2Fe-2S] cluster-binding residues include C3, C6, C18, and C25. Hybrid [4Fe-2O-2S] cluster contacts are provided by H252, E276, C320, C408, C436, C461, E495, and K497. C408 carries the post-translational modification Cysteine persulfide.

This sequence belongs to the HCP family. [2Fe-2S] cluster is required as a cofactor. Hybrid [4Fe-2O-2S] cluster serves as cofactor.

It localises to the cytoplasm. It catalyses the reaction A + NH4(+) + H2O = hydroxylamine + AH2 + H(+). Its function is as follows. Catalyzes the reduction of hydroxylamine to form NH(3) and H(2)O. This chain is Hydroxylamine reductase, found in Shewanella pealeana (strain ATCC 700345 / ANG-SQ1).